The primary structure comprises 347 residues: Fatty acid elongase 2 (347 aa).

The Lumenal segment spans residues 1–62 (MNSLVTQYAA…PSEFQFIAGE (62 aa)). Residue Asn32 is glycosylated (N-linked (GlcNAc...) asparagine). A helical transmembrane segment spans residues 63–83 (LPLSTLPPVLYAITAYYVIIF). Residues 84 to 96 (GGRFLLSKSKPFK) lie on the Cytoplasmic side of the membrane. Residues 97–119 (LNGLFQLHNLVLTSLSLTLLLLM) form a helical membrane-spanning segment. Over 120 to 122 (VEQ) the chain is Lumenal. Residues 123-142 (LVPIIVQHGLYFAICNIGAW) traverse the membrane as a helical segment. Residues 143–146 (TQPL) lie on the Cytoplasmic side of the membrane. A helical membrane pass occupies residues 147 to 169 (VTLYYMNYIVKFIEFIDTFFLVL). The Lumenal portion of the chain corresponds to 170-200 (KHKKLTFLHTYHHGATALLCYTQLMGTTSIS). Residues 178-182 (HTYHH) carry the HxxHH motif motif. Residues 201 to 221 (WVPISLNLGVHVVMYWYYFLA) traverse the membrane as a helical segment. At 222-231 (ARGIRVWWKE) the chain is on the cytoplasmic side. Residues 232–254 (WVTRFQIIQFVLDIGFIYFAVYQ) form a helical membrane-spanning segment. The Lumenal segment spans residues 255 to 275 (KAVHLYFPILPHCGDCVGSTT). The chain crosses the membrane as a helical span at residues 276–296 (ATFAGCAIISSYLVLFISFYI). Over 297–347 (NVYKRKGTKTSRVVKRAHGGVAAKVNEYVNVDLKNVPTPSPSPKPQHRRKR) the chain is Cytoplasmic. Thr334 carries the phosphothreonine modification. Phosphoserine is present on residues Ser336 and Ser338. The Di-lysine-like motif motif lies at 344 to 347 (RRKR).

This sequence belongs to the ELO family.

It localises to the endoplasmic reticulum membrane. It catalyses the reaction a very-long-chain acyl-CoA + malonyl-CoA + H(+) = a very-long-chain 3-oxoacyl-CoA + CO2 + CoA. The enzyme catalyses octadecanoyl-CoA + malonyl-CoA + H(+) = 3-oxoeicosanoyl-CoA + CO2 + CoA. It carries out the reaction hexadecanoyl-CoA + malonyl-CoA + H(+) = 3-oxooctadecanoyl-CoA + CO2 + CoA. The catalysed reaction is eicosanoyl-CoA + malonyl-CoA + H(+) = 3-oxodocosanoyl-CoA + CO2 + CoA. It catalyses the reaction docosanoyl-CoA + malonyl-CoA + H(+) = 3-oxotetracosanoyl-CoA + CO2 + CoA. Its function is as follows. Component of a microsomal membrane-bound long-chain fatty acid elongation system, which produces the 20-26-carbon very long-chain fatty acids (VLCFA) from long-chain fatty acid precursors and is involved ceramide and inositol sphingolipid biosynthesis. Component of elongase II, which elongates 16-18 carbon fatty acyl-CoAs such as palmitoyl-CoA and stearoyl-CoA to 20-22-carbon fatty acids by incorporation of malonyl-CoA. Involved in the synthesis of 1,3-beta-glucan. The enzymes active site faces the cytosol, whereas VLCFA length is determined by a lysine near the luminal end of transmembrane helix 6. Plays an important role in lipotoxic cell death induced by oleic acid through maintaining a balanced fatty acid composition in thr plasma membrane. This is Fatty acid elongase 2 from Saccharomyces cerevisiae (strain ATCC 204508 / S288c) (Baker's yeast).